A 102-amino-acid chain; its full sequence is MEIKQIAVAGSLESSDMMITISPNDGQGIVLELDSSVEKQFGNHIRALIKTTLARLGVESATIEAVDKGALDCTIQARTIAAVHRAAGVEHYNWKEIDSWNA.

S14 carries the post-translational modification O-(phosphoribosyl dephospho-coenzyme A)serine.

It belongs to the CitD family. As to quaternary structure, oligomer with a subunit composition of (alpha,beta,gamma)6.

The protein localises to the cytoplasm. In terms of biological role, covalent carrier of the coenzyme of citrate lyase. This is Citrate lyase acyl carrier protein from Streptococcus equi subsp. equi (strain 4047).